We begin with the raw amino-acid sequence, 1058 residues long: Bromodomain-containing protein 1 (1058 aa).

The span at 1–12 shows a compositional bias: basic residues; that stretch reads MRRKGRCHRGSA. The interval 1 to 25 is disordered; that stretch reads MRRKGRCHRGSAARHPSSPCSIKHS. The tract at residues 31–80 is interaction with KAT7/HBO1 and histones; that stretch reads LTYAQAQRMVEIEIEGRLHRISIFDPLEIILEDDLTAQEMSECNSNKENS. At S128 the chain carries Phosphoserine. Residues 214-264 form a PHD-type 1 zinc finger; that stretch reads DAVCCICMDGECQNSNVILFCDMCNLAVHQECYGVPYIPEGQWLCRHCLQS. Residues 268-301 form a C2HC pre-PHD-type zinc finger; the sequence is PADCVLCPNKGGAFKKTDDDRWGHVVCALWIPEV. The segment at 325-389 adopts a PHD-type 2 zinc-finger fold; it reads LTCYLCKQKG…RKTAYCDVHT (65 aa). N6-acetyllysine is present on residues K368, K516, and K519. Glycyl lysine isopeptide (Lys-Gly) (interchain with G-Cter in SUMO2) cross-links involve residues K554 and K594. One can recognise a Bromo domain in the interval 562-666; the sequence is LRLTPLTVLL…DQGGVVLRQA (105 aa). Over residues 754–763 the composition is skewed to polar residues; sequence KLSQQHSQAP. Disordered stretches follow at residues 754–776 and 791–847; these read KLSQQHSQAPPTGAGTGGFEDEA and LETL…AAPR. At S803 the chain carries Phosphoserine. An N6-acetyllysine modification is found at K903. Positions 929-1012 constitute a PWWP domain; the sequence is PLKVVWAKCS…KSKMVPLGVD (84 aa). Residues S1052 and S1055 each carry the phosphoserine modification.

Component of some HBO1 complexes composed of KAT7/HBO1, MEAF6, ING4 and BRD1/BRPF2. Component of the MOZ/MORF complex composed at least of ING5, KAT6A, KAT6B, MEAF6 and one of BRPF1, BRD1/BRPF2 and BRPF3. Interacts (via PHD-type zinc finger domain) with unmodified histone H3. Interacts (via PWWP domain) with dimethylated and trimethylated 'Lys-79' on histone H3.

Its subcellular location is the nucleus. The protein resides in the chromosome. Functionally, scaffold subunit of various histone acetyltransferase (HAT) complexes, such as the MOZ/MORF and HBO1 complexes, that acts as a regulator of hematopoiesis. Plays a key role in HBO1 complex by directing KAT7/HBO1 specificity towards histone H3 'Lys-14' acetylation (H3K14ac), thereby promoting erythroid differentiation. This chain is Bromodomain-containing protein 1, found in Mus musculus (Mouse).